A 231-amino-acid chain; its full sequence is Orotidine 5'-phosphate decarboxylase (231 aa).

Substrate contacts are provided by residues D11, K32, 59–68, T118, R180, Q189, G209, and R210; that span reads DLKFHDIPNT. K61 functions as the Proton donor in the catalytic mechanism.

This sequence belongs to the OMP decarboxylase family. Type 1 subfamily. As to quaternary structure, homodimer.

The enzyme catalyses orotidine 5'-phosphate + H(+) = UMP + CO2. Its pathway is pyrimidine metabolism; UMP biosynthesis via de novo pathway; UMP from orotate: step 2/2. Its function is as follows. Catalyzes the decarboxylation of orotidine 5'-monophosphate (OMP) to uridine 5'-monophosphate (UMP). This is Orotidine 5'-phosphate decarboxylase from Synechocystis sp. (strain ATCC 27184 / PCC 6803 / Kazusa).